The primary structure comprises 324 residues: MGRTSKDKRDVYYRLAKENGWRARSAFKLLQLDEEFQLFKGVKRAVDLCAAPGSWSQVLSQKVGGQGSGQVVAVDLQAMAPLPGVIQIQGDITQLSTAKEIIQHFEGCPADLVVCDGAPDVTGLHDVDEYMQAQLLLAALNIATHVLKLGGCFVAKIFRGRDVTLLYSQLRIFFSSVLCAKPKSSRNSSIEAFAVCQGYDPPEGFIPDLTRPLLNHSYDTDFNQLDGPTRVIVPFVACGDLSAYDSDRTYSLDLDGGSEYKYTPPTQPPIAPPYQEACRLKKNGQLAKELLPQECSINSVDKLPQPLAIHTLLDPKVEDNEIHC.

5 residues coordinate S-adenosyl-L-methionine: G53, W55, D75, D91, and D116. The active-site Proton acceptor is the K156. Residues D221 to D240 form a required for binding to WDR6 region.

This sequence belongs to the class I-like SAM-binding methyltransferase superfamily. RNA methyltransferase RlmE family. TRM7 subfamily. In terms of assembly, interacts with WDR6; the interaction is direct, and required for 2'-O-methylation of position 34 in substrate tRNAs.

Its subcellular location is the cytoplasm. The protein resides in the nucleus. The catalysed reaction is cytidine(32)/guanosine(34) in tRNA + 2 S-adenosyl-L-methionine = 2'-O-methylcytidine(32)/2'-O-methylguanosine(34) in tRNA + 2 S-adenosyl-L-homocysteine + 2 H(+). In terms of biological role, methylates the 2'-O-ribose of nucleotides at positions 32 and 34 of the tRNA anticodon loop of substrate tRNAs. Requisite for faithful cytoplasmic translation. Requires THADA for methylation of the cytidine at position 32 of the anticodon loop of substrate tRNAs. Requires WDR6 for methylation of the nucleotide at position 34 of the anticodon loop of substrate tRNAs. Promotes translation efficiency of the UUU codon. Plays a role in neurogenesis. Required for expression of genes involved in neurogenesis and mitochondrial translation and energy generation. Requisite for RNA-mediated gene silencing. May modify position 32 in tRNA(Arg(ACG)), tRNA(Gln(CUG)), tRNA(Leu(UAA)), tRNA(Leu(UAG)), tRNA(Leu(AAG)), tRNA(Leu(CAG)), tRNA(Phe(GAA)), tRNA(Trp(CCA)) and tRNA(Val(AAC)), and position 34 in tRNA(Phe(GAA)), tRNA(Leu(CAA)), tRNA(Leu(UAA)), tRNA(Sec(UCA)), and tRNA(Trp(CCA)). This chain is tRNA (cytidine(32)/guanosine(34)-2'-O)-methyltransferase, found in Mus musculus (Mouse).